A 220-amino-acid polypeptide reads, in one-letter code: Charged multivesicular body protein 2a (220 aa).

Coiled coils occupy residues 12–53 (EELL…MAKQ) and 198–219 (EATA…NLRR). The tract at residues 196–220 (KGEATAALADADADLEERLNNLRRD) is disordered. The short motif at 208 to 218 (ADLEERLNNLR) is the MIT-interacting motif element. The span at 211–220 (EERLNNLRRD) shows a compositional bias: basic and acidic residues.

This sequence belongs to the SNF7 family. As to quaternary structure, probable core component of the endosomal sorting required for transport complex III (ESCRT-III). ESCRT-III components are thought to multimerize to form a flat lattice on the perimeter membrane of the endosome.

The protein resides in the late endosome membrane. It localises to the cytoplasm. In terms of biological role, probable core component of the endosomal sorting required for transport complex III (ESCRT-III) which is involved in multivesicular bodies (MVBs) formation and sorting of endosomal cargo proteins into MVBs. MVBs contain intraluminal vesicles (ILVs) that are generated by invagination and scission from the limiting membrane of the endosome and mostly are delivered to lysosomes enabling degradation of membrane proteins, such as stimulated growth factor receptors, lysosomal enzymes and lipids. The chain is Charged multivesicular body protein 2a (chmp2a) from Xenopus laevis (African clawed frog).